The following is a 663-amino-acid chain: MKPRLIFIFFACYFLNFLPFSNQLPCSYQNPRIEDILLEVPIEHEHPHRHRRGLPSSDPTSPPVEKFAPLRIQLHYDKSIQNLTAEVQNFVNTTLLPEAVGYWENALRVRPMTTPIRLRRKCISSFYYYKQGMRNVACDKGCRERTTCGEADIPRDHLLDCLACNNTDDCKTTGELGEGVKDTDFILYVTAHDSKRCEGPETLSYAAHCQQEADFDRPIAGNVNLCPSALSVHNHDYEILTSTVKHEILHALGFSVGLYAFFRDSEGKPRTKRNRYGRPTSLNKQKGYYDWDSNTITTVLRENWWTGEGKVIHPIHMMVTPKVREEARRHFGCDKLEGAELENQGGEGTYLTHWEKRAYENEAMTGTHTQNPVYSRLTLAFLEDTGWYQPNYEVAEDLHWGKQLGCDFAMKSCGEWIHEKKILGEDAYPYCSDIKHDGSKSMAITRCTTQRDSLALCNLVPFQKELPSQYRNFMSLPGVNPDGAKYYGGSVEMADYCPFLQEFEWKLIDKTQHKDSRCELEGNGKEGEDILEVYGANSKCFEFPKPWTERKCGRIRVLSHYMAGCYEHQCTNGTLYVGSYNATDMYPCYAENQKIHIKKVVDGWLREGSLICPKCEDYCTNCGPPIVIPDYIGDPELDEPCSSNFKLSVLAFLCYLIFLHIRS.

Histidine 246 contributes to the Zn(2+) binding site. Glutamate 247 is an active-site residue. The Zn(2+) site is built by histidine 250 and histidine 353.

It belongs to the peptidase M8 family. Zn(2+) serves as cofactor.

It localises to the cytoplasm. Functionally, essential for the coordination of mitotic progression, and also plays a role in cell migration. This Caenorhabditis elegans protein is Leishmanolysin-like peptidase.